The sequence spans 338 residues: Ketol-acid reductoisomerase (NADP(+)) (338 aa).

A KARI N-terminal Rossmann domain is found at 1-181 (MNVYYDKDCD…GGGRSGIIET (181 aa)). Residues 24–27 (YGSQ), arginine 47, serine 50, serine 52, and 82–85 (DEFQ) each bind NADP(+). Histidine 107 is a catalytic residue. Glycine 133 lines the NADP(+) pocket. The KARI C-terminal knotted domain occupies 182 to 327 (TFKDETETDL…AKLRSMMPWI (146 aa)). Mg(2+) is bound by residues aspartate 190, glutamate 194, glutamate 226, and glutamate 230. Serine 251 serves as a coordination point for substrate.

It belongs to the ketol-acid reductoisomerase family. Mg(2+) is required as a cofactor.

The enzyme catalyses (2R)-2,3-dihydroxy-3-methylbutanoate + NADP(+) = (2S)-2-acetolactate + NADPH + H(+). It catalyses the reaction (2R,3R)-2,3-dihydroxy-3-methylpentanoate + NADP(+) = (S)-2-ethyl-2-hydroxy-3-oxobutanoate + NADPH + H(+). The protein operates within amino-acid biosynthesis; L-isoleucine biosynthesis; L-isoleucine from 2-oxobutanoate: step 2/4. It participates in amino-acid biosynthesis; L-valine biosynthesis; L-valine from pyruvate: step 2/4. Functionally, involved in the biosynthesis of branched-chain amino acids (BCAA). Catalyzes an alkyl-migration followed by a ketol-acid reduction of (S)-2-acetolactate (S2AL) to yield (R)-2,3-dihydroxy-isovalerate. In the isomerase reaction, S2AL is rearranged via a Mg-dependent methyl migration to produce 3-hydroxy-3-methyl-2-ketobutyrate (HMKB). In the reductase reaction, this 2-ketoacid undergoes a metal-dependent reduction by NADPH to yield (R)-2,3-dihydroxy-isovalerate. The sequence is that of Ketol-acid reductoisomerase (NADP(+)) from Psychrobacter sp. (strain PRwf-1).